A 534-amino-acid chain; its full sequence is NEDD8-activating enzyme E1 regulatory subunit (534 aa).

Alanine 2 carries the N-acetylalanine modification. An N6-acetyllysine mark is found at lysine 6 and lysine 341. The segment at 331 to 344 (DMIADSNKYIKLQN) is interaction with UBA3.

Belongs to the ubiquitin-activating E1 family. ULA1 subfamily. In terms of assembly, heterodimer of UBA3 and NAE1. The complex binds NEDD8 and UBE2M. Binds APP and TP53BP2. In terms of processing, ubiquitinated by TRIP12, leading to its degradation by the proteasome. Expressed throughout the brain. In hippocampus, strongly expressed in granule cells and in the pyramidal cell layer. Strongly expressed in the piriform cortex. In the cerebellum, expressed only in Purkinje cells.

It localises to the cell membrane. Its pathway is protein modification; protein neddylation. With respect to regulation, binding of TP53BP2 to the regulatory subunit NAE1 decreases neddylation activity. In terms of biological role, regulatory subunit of the dimeric UBA3-NAE1 E1 enzyme. E1 activates NEDD8 by first adenylating its C-terminal glycine residue with ATP, thereafter linking this residue to the side chain of the catalytic cysteine, yielding a NEDD8-UBA3 thioester and free AMP. E1 finally transfers NEDD8 to the catalytic cysteine of UBE2M. Necessary for cell cycle progression through the S-M checkpoint. Overexpression of NAE1 causes apoptosis through deregulation of NEDD8 conjugation. The covalent attachment of NEDD8 to target proteins is known as 'neddylation' and the process is involved in the regulation of cell growth, viability and development. The protein is NEDD8-activating enzyme E1 regulatory subunit (Nae1) of Rattus norvegicus (Rat).